A 468-amino-acid polypeptide reads, in one-letter code: Monogalactosyldiacylglycerol synthase 2, chloroplastic (468 aa).

UDP-binding positions include His82, Arg251, 361–365 (GTIAE), and Glu383.

This sequence belongs to the glycosyltransferase 28 family. Expressed mainly in floral buds. Detected in roots, leaves, stems, siliques and pollen tubes.

Its subcellular location is the plastid. The protein localises to the chloroplast outer membrane. It catalyses the reaction a 1,2-diacyl-sn-glycerol + UDP-alpha-D-galactose = a 1,2-diacyl-3-O-(beta-D-galactosyl)-sn-glycerol + UDP + H(+). The catalysed reaction is 1,2-di-(9Z,12Z-octadecadienoyl)-sn-glycerol + UDP-alpha-D-galactose = 1,2-di-(9Z,12Z-octadecadienoyl)-3-beta-D-galactosyl-sn-glycerol + UDP + H(+). It carries out the reaction 1-(9Z-octadecenoyl)-2-hexadecanoyl-sn-glycerol + UDP-alpha-D-galactose = 1-(9Z-octadecenoyl)-2-hexadecanoyl-3-beta-D-galactosyl-sn-glycerol + UDP + H(+). The enzyme catalyses 1,2-di-(9Z-octadecenoyl)-sn-glycerol + UDP-alpha-D-galactose = 1,2-di-(9Z-octadecenoyl)-3-beta-D-galactosyl-sn-glycerol + UDP + H(+). Its activity is regulated as follows. Inhibited by galvestine-1. In terms of biological role, involved in the synthesis of monogalactosyldiacylglycerol, the major structural component of photosynthetic membranes and in the chloroplast envelope biogenesis. Can use both prokaryotic (18:1/16:0) or eukaryotic (18:2/18:2) 1,2-diacylglycerol species, but operates with some preference for the eukaryotic one. Plays a minor role in galactolipid synthesis in chloroplasts. Is required for membrane lipid remodeling in phosphate-starved roots. Acts as the minor factor involved in digalactosyldiacylglycerol (DGDG) biosynthesis in phosphate-starved roots. Does not seem to be required for plant growth under nutrient-sufficient conditions. Required for membrane lipid remodeling in plants grown in acidic conditions. This chain is Monogalactosyldiacylglycerol synthase 2, chloroplastic, found in Arabidopsis thaliana (Mouse-ear cress).